The primary structure comprises 202 residues: MEPYSALLAVTILCLTSTMGVSGDCSTNISPKKGLDKAKYFSGTWYVTHYLDKDPQVTDPYCSSFTPKESGGTVKEALYHFNSKKKTSFYNIGEGKLGSSGVQYTAKYNTVDKKRKEIEPADPKDSYTLTVLEADDSSALVHICLREGPKDLGDLYTVLSHQKTGEPSATVKNAVAQAGLKLNDFVDTKTLSCTYDDQFTSM.

The N-terminal stretch at 1–23 (MEPYSALLAVTILCLTSTMGVSG) is a signal peptide. Intrachain disulfides connect C25–C144 and C62–C193. Residue H80 participates in heme binding.

The protein belongs to the calycin superfamily. Nitrophorin family. Interacts weakly with host coagulation factor IX (F9) (inactive and activated) in the presence of Ca(2+). As to expression, salivary gland (at protein level).

It localises to the secreted. Heme-based protein that deliver nitric oxide gas (NO) to the victim while feeding, resulting in vasodilation and inhibition of platelet aggregation. Reversibly binds nitric oxide (NO). Also binds tightly to histamine, which is released by the host to induce wound healing. Exhibits weak anticoagulant activity. In Rhodnius prolixus (Triatomid bug), this protein is Nitrophorin-3.